Here is a 462-residue protein sequence, read N- to C-terminus: Gamma-aminobutyric acid receptor subunit alpha-5 (462 aa).

The signal sequence occupies residues 1–31 (MDNGMFSSFIMIKNLLLFCISMNLASHFGFS). The Extracellular portion of the chain corresponds to 32 to 260 (QMPTSSVKAE…FHLKRKIGYF (229 aa)). Asn-45 is a glycosylation site (N-linked (GlcNAc...) asparagine). Arg-101 is a binding site for 4-aminobutanoate. Asn-145 carries an N-linked (GlcNAc...) asparagine glycan. Thr-164 contributes to the 4-aminobutanoate binding site. Residues Cys-173 and Cys-187 are joined by a disulfide bond. N-linked (GlcNAc...) asparagine glycosylation is found at Asn-207 and Asn-236. The next 3 membrane-spanning stretches (helical) occupy residues 261-281 (VIQT…SFWL), 287-308 (PART…ISAR), and 319-340 (AMDW…EFAT). Residues 341 to 427 (VNYFTKRGWA…TYNSISKIDK (87 aa)) are Cytoplasmic-facing. Lys-355 is covalently cross-linked (Glycyl lysine isopeptide (Lys-Gly) (interchain with G-Cter in ubiquitin)). A disordered region spans residues 375–412 (TNAYTTGKMTHPPNIPKEQTPAGTTNASSASVKPEDKA). Polar residues predominate over residues 395–405 (PAGTTNASSAS). A helical membrane pass occupies residues 428-448 (MSRIIFPLLFGTFNLVYWATY).

Belongs to the ligand-gated ion channel (TC 1.A.9) family. Gamma-aminobutyric acid receptor (TC 1.A.9.5) subfamily. GABRA5 sub-subfamily. In terms of assembly, heteropentamer, formed by a combination of alpha (GABRA1-6), beta (GABRB1-3), gamma (GABRG1-3), delta (GABRD), epsilon (GABRE), rho (GABRR1-3), pi (GABRP) and theta (GABRQ) chains, each subunit exhibiting distinct physiological and pharmacological properties.

It localises to the postsynaptic cell membrane. The protein localises to the cell membrane. The enzyme catalyses chloride(in) = chloride(out). Alpha subunit of the heteropentameric ligand-gated chloride channel gated by gamma-aminobutyric acid (GABA), a major inhibitory neurotransmitter in the brain. GABA-gated chloride channels, also named GABA(A) receptors (GABAAR), consist of five subunits arranged around a central pore and contain GABA active binding site(s) located at the alpha and beta subunit interface(s). When activated by GABA, GABAARs selectively allow the flow of chloride anions across the cell membrane down their electrochemical gradient. GABAARs containing alpha-5/GABRA5 subunits are mainly extrasynaptic and contribute to the tonic GABAergic inhibition in the hippocampus. Extrasynaptic alpha-5-containing GABAARs in CA1 pyramidal neurons play a role in learning and memory processes. This Bos taurus (Bovine) protein is Gamma-aminobutyric acid receptor subunit alpha-5 (GABRA5).